The following is a 651-amino-acid chain: LysM domain receptor-like kinase 3 (651 aa).

Residues 1-19 form the signal peptide; that stretch reads MNLTFYIFFLSLLPSFSSS. N-linked (GlcNAc...) asparagine glycosylation is found at Asn-2, Asn-23, Asn-42, Asn-73, Asn-86, Asn-100, Asn-114, and Asn-177. The Extracellular segment spans residues 20-236; it reads KPMNCSDTTR…TAKSGSHVPY (217 aa). Disulfide bonds link Cys-24–Cys-76, Cys-31–Cys-133, and Cys-74–Cys-131. Positions 142 to 186 constitute a LysM domain; it reads MSYVAMAGDSVQSLSSRFGVSMDRIEDVNGILNLDNITAGDLLYI. A disordered region spans residues 196 to 216; the sequence is YETSKINPPAPSPAPASSLAN. 2 N-linked (GlcNAc...) asparagine glycosylation sites follow: Asn-218 and Asn-225. Residues 237 to 257 form a helical membrane-spanning segment; sequence IWIVGGLGVVLALLVLCILVC. The Cytoplasmic portion of the chain corresponds to 258 to 651; that stretch reads ICLRSSSCSS…QVFSGLVQGR (394 aa). Thr-330 carries the phosphothreonine modification. The 288-residue stretch at 341–628 folds into the Protein kinase domain; sequence FSDSNLLGHG…VVISLSQILL (288 aa). ATP is bound by residues 347–355 and Lys-368; that span reads LGHGNYGSV. Tyr-410 carries the phosphotyrosine modification. Asp-464 (proton acceptor) is an active-site residue. The residue at position 468 (Ser-468) is a Phosphoserine. Thr-500 and Thr-505 each carry phosphothreonine. At Tyr-513 the chain carries Phosphotyrosine.

The protein belongs to the protein kinase superfamily. Ser/Thr protein kinase family.

It localises to the cell membrane. Functionally, putative Lysin motif (LysM) receptor kinase that may recognize microbe-derived N-acetylglucosamine (NAG)-containing ligands. The protein is LysM domain receptor-like kinase 3 (LYK3) of Arabidopsis thaliana (Mouse-ear cress).